The following is a 90-amino-acid chain: Small ribosomal subunit protein uS15 (90 aa).

It belongs to the universal ribosomal protein uS15 family. As to quaternary structure, part of the 30S ribosomal subunit. Forms a bridge to the 50S subunit in the 70S ribosome, contacting the 23S rRNA.

In terms of biological role, one of the primary rRNA binding proteins, it binds directly to 16S rRNA where it helps nucleate assembly of the platform of the 30S subunit by binding and bridging several RNA helices of the 16S rRNA. Its function is as follows. Forms an intersubunit bridge (bridge B4) with the 23S rRNA of the 50S subunit in the ribosome. This Wolbachia pipientis subsp. Culex pipiens (strain wPip) protein is Small ribosomal subunit protein uS15.